The primary structure comprises 472 residues: MAVKSYQAGVTQYRQSYWQPDYMPLDTDILACFKITPQPGVDREEAAAAVAAESSCGTWTTVWTDLLTDLDYYKGRAYRLEDVPGDDTCYYAFIAYPIDLFEEGSVVNVFTSLVGNVFGFKAVRALRLEDLRFPIAYVKTCGGPPHGIQVERDKLNKYGRPLLGCTIKPKLGLSAKNYGRACYEALRGGLDFTKDDENINSQPFMRWRDRFDFVMEAVQKAEHETGERKGHYLNVTAPTPEEMYKRAEYAKEIRAPIIMHDYLAGGLCANAGLANWCRNNGMLLHIHRAMHAVIDRNPHHGIHFRVLTKILRLSGGDHLHTGTVVGKLEGDRASTLGWIDLLRESFVPEDRSRGIFFDQDWGSMPGGFAVASGGIHVWHMPALVTIFGDDSVLQFGGGTVGHPWGNALAHANRVALEACVQARGEGRHLEKEGKDLLTAAAAHSPELKIAMETWKEIKFEFETMDKLAVANK.

Residues N116 and T166 each coordinate substrate. K168 acts as the Proton acceptor in catalysis. Residue K170 participates in substrate binding. Mg(2+) contacts are provided by K194, D196, and E197. At K194 the chain carries N6-carboxylysine. H287 functions as the Proton acceptor in the catalytic mechanism. The substrate site is built by R288, H320, and S372.

The protein belongs to the RuBisCO large chain family. Type I subfamily. Heterohexadecamer of 8 large chains and 8 small chains. Mg(2+) serves as cofactor.

It catalyses the reaction 2 (2R)-3-phosphoglycerate + 2 H(+) = D-ribulose 1,5-bisphosphate + CO2 + H2O. The catalysed reaction is D-ribulose 1,5-bisphosphate + O2 = 2-phosphoglycolate + (2R)-3-phosphoglycerate + 2 H(+). Its function is as follows. RuBisCO catalyzes two reactions: the carboxylation of D-ribulose 1,5-bisphosphate, the primary event in carbon dioxide fixation, as well as the oxidative fragmentation of the pentose substrate. Both reactions occur simultaneously and in competition at the same active site. This Nitrobacter vulgaris protein is Ribulose bisphosphate carboxylase large chain.